The chain runs to 447 residues: Phosphoglucosamine mutase (447 aa).

The active-site Phosphoserine intermediate is Ser-102. Residues Ser-102, Asp-241, Asp-243, and Asp-245 each contribute to the Mg(2+) site. The residue at position 102 (Ser-102) is a Phosphoserine.

The protein belongs to the phosphohexose mutase family. Requires Mg(2+) as cofactor. In terms of processing, activated by phosphorylation.

It carries out the reaction alpha-D-glucosamine 1-phosphate = D-glucosamine 6-phosphate. Catalyzes the conversion of glucosamine-6-phosphate to glucosamine-1-phosphate. The sequence is that of Phosphoglucosamine mutase from Pseudomonas syringae pv. syringae (strain B728a).